The sequence spans 378 residues: MKVKVLSLLVPALLVAGAANAAEIYNKDGNKLDLFGKVDGLHYFSDDKGSDGDQTYMRIGFKGETQVNDQLTGYGQWEYQIQGNQTEGSNDSWTRVAFAGLKFADAGSFDYGRNYGVTYDVTSWTDVLPEFGGDTYGADNFMQQRGNGYATYRNTDFFGLVDGLDFALQYQGKNGSVSGENTNGRSLLNQNGDGYGGSLTYAIGEGFSVGGAITTSKRTADQNNTANARLYGNGDRATVYTGGLKYDANNIYLAAQYSQTYNATRFGTSNGSNPSTSYGFANKAQNFEVVAQYQFDFGLRPSVAYLQSKGKDISNGYGASYGDQDIVKYVDVGATYYFNKNMSTYVDYKINLLDKNDFTRDAGINTDDIVALGLVYQF.

Positions 1–21 (MKVKVLSLLVPALLVAGAANA) are cleaved as a signal peptide.

This sequence belongs to the Gram-negative porin family. As to quaternary structure, homotrimer.

It localises to the cell outer membrane. Its function is as follows. Forms pores that allow passive diffusion of small molecules across the outer membrane. The protein is Outer membrane porin C (ompC) of Salmonella typhimurium (strain LT2 / SGSC1412 / ATCC 700720).